Reading from the N-terminus, the 981-residue chain is Mineralocorticoid receptor (981 aa).

Residues 1-603 form a modulating region; the sequence is METKGYHSLP…STGSSRPSKI (603 aa). Polar residues predominate over residues 234 to 258; that stretch reads SLTCSPSVENRGSRSHSPTHASNVG. Disordered stretches follow at residues 234–331 and 355–376; these read SLTC…ASTV and AIQD…VPFP. Residues Ser250, Ser259, Ser283, Ser287, and Ser299 each carry the phosphoserine modification. Low complexity-rich tracts occupy residues 259-300 and 309-327; these read SPLS…VSSP and SVSS…SSPT. Cys604, Cys607, Cys621, Cys624, Cys640, Cys646, Cys656, and Cys659 together coordinate Zn(2+). 2 NR C4-type zinc fingers span residues 604–624 and 640–664; these read CLVC…CGSC and CAGR…LQKC. Residues 604-669 constitute a DNA-binding region (nuclear receptor); it reads CLVCGDEASG…RLQKCLQAGM (66 aa). The tract at residues 670–722 is hinge; that stretch reads NLGARKSKKLGKLKGLHEEQPQQPPPPPPQSPEEGTTYIAPTKEPSVNSALVP. The segment at 684 to 710 is disordered; it reads GLHEEQPQQPPPPPPQSPEEGTTYIAP. Positions 691–700 are enriched in pro residues; it reads QQPPPPPPQS. Positions 723–961 constitute an NR LBD domain; it reads QLTSITHALT…EFPAMLVEII (239 aa). 21-hydroxyprogesterone-binding residues include Asn767 and Gln773. Positions 767 and 773 each coordinate aldosterone. Progesterone-binding residues include Asn767 and Gln773. Residues 779-782 form an important for coactivator binding region; sequence KWAK. 21-hydroxyprogesterone-binding residues include Arg814 and Thr942. 2 residues coordinate aldosterone: Arg814 and Thr942. Residues Arg814 and Thr942 each contribute to the progesterone site.

The protein belongs to the nuclear hormone receptor family. NR3 subfamily. Heteromultimeric cytoplasmic complex with HSP90, HSP70, and FKBP4, in the absence of ligand. After ligand binding, it translocates to the nucleus and binds to DNA as a homodimer and as a heterodimer with NR3C1. Binds the coactivator NCOA2. May interact with HSD11B2 in the absence of ligand. Binds the coactivators NCOA1, TIF1 and NRIP1. Post-translationally, phosphorylated. As to expression, detected in liver, brain, heart, kidney, colon, aorta, hippocampus, hypothalamus and adrenal fasciculata.

It localises to the cytoplasm. It is found in the nucleus. Its subcellular location is the endoplasmic reticulum membrane. Functionally, receptor for both mineralocorticoids (MC) such as aldosterone and glucocorticoids (GC) such as corticosterone or cortisol. Binds to mineralocorticoid response elements (MRE) and transactivates target genes. The effect of MC is to increase ion and water transport and thus raise extracellular fluid volume and blood pressure and lower potassium levels. The sequence is that of Mineralocorticoid receptor (Nr3c2) from Rattus norvegicus (Rat).